The chain runs to 509 residues: Maturase K (509 aa).

It belongs to the intron maturase 2 family. MatK subfamily.

It is found in the plastid. Its subcellular location is the chloroplast. Its function is as follows. Usually encoded in the trnK tRNA gene intron. Probably assists in splicing its own and other chloroplast group II introns. The protein is Maturase K of Eucommia ulmoides (Hardy rubber tree).